Consider the following 90-residue polypeptide: Co-chaperonin GroES (90 aa).

This sequence belongs to the GroES chaperonin family. As to quaternary structure, heptamer of 7 subunits arranged in a ring. Interacts with the chaperonin GroEL.

The protein localises to the cytoplasm. Functionally, together with the chaperonin GroEL, plays an essential role in assisting protein folding. The GroEL-GroES system forms a nano-cage that allows encapsulation of the non-native substrate proteins and provides a physical environment optimized to promote and accelerate protein folding. GroES binds to the apical surface of the GroEL ring, thereby capping the opening of the GroEL channel. The protein is Co-chaperonin GroES of Thermosipho melanesiensis (strain DSM 12029 / CIP 104789 / BI429).